Consider the following 274-residue polypeptide: Nitrogenase iron protein (274 aa).

Residue 8-15 participates in ATP binding; it reads GKGGIGKS. Residue C94 participates in [4Fe-4S] cluster binding. R97 carries the post-translational modification ADP-ribosylarginine; by dinitrogenase reductase ADP-ribosyltransferase. C131 provides a ligand contact to [4Fe-4S] cluster.

This sequence belongs to the NifH/BchL/ChlL family. Homodimer. [4Fe-4S] cluster is required as a cofactor. The reversible ADP-ribosylation of Arg-97 inactivates the nitrogenase reductase and regulates nitrogenase activity.

The enzyme catalyses N2 + 8 reduced [2Fe-2S]-[ferredoxin] + 16 ATP + 16 H2O = H2 + 8 oxidized [2Fe-2S]-[ferredoxin] + 2 NH4(+) + 16 ADP + 16 phosphate + 6 H(+). In terms of biological role, the key enzymatic reactions in nitrogen fixation are catalyzed by the nitrogenase complex, which has 2 components: the iron protein and the molybdenum-iron protein. The chain is Nitrogenase iron protein from Prosthecochloris aestuarii (strain DSM 271 / SK 413).